Reading from the N-terminus, the 197-residue chain is MVNVRFYRNYGKTFKKPRRPYEKERLDAELKLVGEYGLRCKRELWRVQYTLSRIRNAARELLTLDEKNPRRIFEGEALLRRMNRYGLLDETQNKLDYVLALTVENFLERRLQTIVFKSGMAKSIHHARVLIRQRHIRVGRQLVNIPSFMVRVESQKHVDFSLTSPFGGGRPGRVKRRNERAGAKKASGGDGDEDDEE.

The 75-residue stretch at 109–183 folds into the S4 RNA-binding domain; the sequence is RRLQTIVFKS…VKRRNERAGA (75 aa). Residues 161-197 form a disordered region; sequence SLTSPFGGGRPGRVKRRNERAGAKKASGGDGDEDDEE.

Belongs to the universal ribosomal protein uS4 family. Binds to the translation initiation factors TIF3E1.

The protein is Small ribosomal subunit protein uS4y (RPS9C) of Arabidopsis thaliana (Mouse-ear cress).